Reading from the N-terminus, the 382-residue chain is D-galactonate dehydratase (382 aa).

Position 183 (aspartate 183) interacts with Mg(2+). Histidine 185 (proton donor) is an active-site residue. The Mg(2+) site is built by glutamate 209 and glutamate 235. Histidine 285 serves as the catalytic Proton acceptor.

It belongs to the mandelate racemase/muconate lactonizing enzyme family. GalD subfamily. It depends on Mg(2+) as a cofactor.

The catalysed reaction is D-galactonate = 2-dehydro-3-deoxy-D-galactonate + H2O. It functions in the pathway carbohydrate acid metabolism; D-galactonate degradation; D-glyceraldehyde 3-phosphate and pyruvate from D-galactonate: step 1/3. In terms of biological role, catalyzes the dehydration of D-galactonate to 2-keto-3-deoxy-D-galactonate. This Escherichia coli O45:K1 (strain S88 / ExPEC) protein is D-galactonate dehydratase.